We begin with the raw amino-acid sequence, 438 residues long: ATP-dependent protease ATPase subunit HslU (438 aa).

ATP is bound by residues Ile-18, Gly-60 to Glu-65, Asp-251, Glu-316, and Arg-388.

This sequence belongs to the ClpX chaperone family. HslU subfamily. In terms of assembly, a double ring-shaped homohexamer of HslV is capped on each side by a ring-shaped HslU homohexamer. The assembly of the HslU/HslV complex is dependent on binding of ATP.

The protein resides in the cytoplasm. ATPase subunit of a proteasome-like degradation complex; this subunit has chaperone activity. The binding of ATP and its subsequent hydrolysis by HslU are essential for unfolding of protein substrates subsequently hydrolyzed by HslV. HslU recognizes the N-terminal part of its protein substrates and unfolds these before they are guided to HslV for hydrolysis. This is ATP-dependent protease ATPase subunit HslU from Jannaschia sp. (strain CCS1).